A 700-amino-acid chain; its full sequence is Polyphosphate kinase (700 aa).

N45 is an ATP binding site. 2 residues coordinate Mg(2+): R373 and R403. The PLD phosphodiesterase 1 domain maps to 428 to 462 (PGMKIHAKLLLITRREEQGFVRYAHIGTGNFHERT). H433 (phosphohistidine intermediate) is an active-site residue. ATP-binding residues include Y466, R562, and H590. A PLD phosphodiesterase 2 domain is found at 585-615 (DRFLEHPRVLVVHNDGDPQVFISSADWMERN).

It belongs to the polyphosphate kinase 1 (PPK1) family. Mg(2+) serves as cofactor. Post-translationally, an intermediate of this reaction is the autophosphorylated ppk in which a phosphate is covalently linked to a histidine residue through a N-P bond.

It catalyses the reaction [phosphate](n) + ATP = [phosphate](n+1) + ADP. In terms of biological role, catalyzes the reversible transfer of the terminal phosphate of ATP to form a long-chain polyphosphate (polyP). This chain is Polyphosphate kinase, found in Vibrio vulnificus (strain YJ016).